The following is a 197-amino-acid chain: Guanylate kinase (197 aa).

The Guanylate kinase-like domain maps to 10–187 (GSLFIVSAPA…AYQVLRSILI (178 aa)). An ATP-binding site is contributed by 17 to 24 (APAGTGKT).

It belongs to the guanylate kinase family.

It localises to the cytoplasm. The catalysed reaction is GMP + ATP = GDP + ADP. Functionally, essential for recycling GMP and indirectly, cGMP. The protein is Guanylate kinase of Protochlamydia amoebophila (strain UWE25).